The sequence spans 89 residues: Large ribosomal subunit protein uL23c (89 aa).

Belongs to the universal ribosomal protein uL23 family. In terms of assembly, part of the 50S ribosomal subunit.

The protein resides in the plastid. Its subcellular location is the chloroplast. Binds to 23S rRNA. This Zygnema circumcarinatum (Green alga) protein is Large ribosomal subunit protein uL23c (rpl23).